The chain runs to 194 residues: Lysozyme g-like protein 1 (194 aa).

A signal peptide spans 1–19 (MSALWLLLGLLALMDLSES). Cystine bridges form between cysteine 24–cysteine 80 and cysteine 38–cysteine 49.

Belongs to the glycosyl hydrolase 23 family.

Its subcellular location is the secreted. The sequence is that of Lysozyme g-like protein 1 (LYG1) from Homo sapiens (Human).